A 180-amino-acid chain; its full sequence is Adenine phosphoribosyltransferase (180 aa).

This sequence belongs to the purine/pyrimidine phosphoribosyltransferase family. As to quaternary structure, homodimer.

Its subcellular location is the cytoplasm. It catalyses the reaction AMP + diphosphate = 5-phospho-alpha-D-ribose 1-diphosphate + adenine. It functions in the pathway purine metabolism; AMP biosynthesis via salvage pathway; AMP from adenine: step 1/1. Its function is as follows. Catalyzes a salvage reaction resulting in the formation of AMP, that is energically less costly than de novo synthesis. The chain is Adenine phosphoribosyltransferase from Rhizobium meliloti (strain 1021) (Ensifer meliloti).